A 442-amino-acid chain; its full sequence is UDP-N-acetylmuramoylalanine--D-glutamate ligase (442 aa).

Residue Gly113–Thr119 coordinates ATP.

It belongs to the MurCDEF family.

The protein resides in the cytoplasm. It carries out the reaction UDP-N-acetyl-alpha-D-muramoyl-L-alanine + D-glutamate + ATP = UDP-N-acetyl-alpha-D-muramoyl-L-alanyl-D-glutamate + ADP + phosphate + H(+). It participates in cell wall biogenesis; peptidoglycan biosynthesis. In terms of biological role, cell wall formation. Catalyzes the addition of glutamate to the nucleotide precursor UDP-N-acetylmuramoyl-L-alanine (UMA). This is UDP-N-acetylmuramoylalanine--D-glutamate ligase from Coxiella burnetii (strain CbuK_Q154) (Coxiella burnetii (strain Q154)).